Reading from the N-terminus, the 433-residue chain is MVSTSSYQTTKSKEIFTAAQKLMPGGVSSPVRAFKSVGGQPIVFESVKGAYIRDVDGNEYIDYVGTWGPAICGHAHPEVIAALHDALDKGTSFGAPCVQENILAEMVIDAVPSIEMVRFVNSGTEACMSVLRLMRAFTGRDKIIKFEGCYHGHADMFLVKAGSGVATLGLPDSPGVPKTTTNNTLTAPYNDLEAVKALFVENPDSIAGVILEPVVGNAGFIVPDAGFLEGLRELTKEYGALLMFDEVMTGFRIAYGGAQEKFGITPDLTTLGKVIGGGLPVGAYGGRADIMAMVAPAGPMYQAGTLSGNPLAMTAGIKTLELLQRPGTYQYLDKVTKSLTEGLLKVARDAGHSVSGGYISAMFGMFFTGSPVHNYEDAKKADVAKFGRFHRGMLERGVYLAPSQFEAGFTSLAHTEADIERTLAAAKEVLASL.

Lys273 carries the post-translational modification N6-(pyridoxal phosphate)lysine.

The protein belongs to the class-III pyridoxal-phosphate-dependent aminotransferase family. HemL subfamily. In terms of assembly, homodimer. Requires pyridoxal 5'-phosphate as cofactor.

Its subcellular location is the cytoplasm. The enzyme catalyses (S)-4-amino-5-oxopentanoate = 5-aminolevulinate. The protein operates within porphyrin-containing compound metabolism; protoporphyrin-IX biosynthesis; 5-aminolevulinate from L-glutamyl-tRNA(Glu): step 2/2. Its pathway is porphyrin-containing compound metabolism; chlorophyll biosynthesis. The sequence is that of Glutamate-1-semialdehyde 2,1-aminomutase from Microcystis aeruginosa (strain NIES-843 / IAM M-2473).